Reading from the N-terminus, the 354-residue chain is Divinyl chlorophyll a/b light-harvesting protein PcbG (354 aa).

Helical transmembrane passes span 27 to 47 (FIAA…ASTL), 65 to 85 (IFLA…VWTG), 88 to 108 (VASV…GALS), 201 to 221 (VLGG…FHIA), 241 to 261 (AVLS…AFWC), and 308 to 328 (LTNV…WHAI).

The protein belongs to the PsbB/PsbC family. IsiA/Pcb subfamily. The antenna complex consists of divinyl chlorophylls (a and b) and divinyl chlorophyll a/b binding proteins and binds more divinyl chlorophyll b than does the antenna complex from high-light-adapted Prochlorococcus. It depends on divinyl chlorophyll a as a cofactor. Divinyl chlorophyll b serves as cofactor.

The protein resides in the cellular thylakoid membrane. The antenna complex functions as a light receptor, it captures and delivers excitation energy to photosystems II and I. The Prochlorales pcb genes are not related to higher plant LHCs. The polypeptide is Divinyl chlorophyll a/b light-harvesting protein PcbG (pcbG) (Prochlorococcus marinus (strain NATL2A)).